A 119-amino-acid chain; its full sequence is Large ribosomal subunit protein bL20c (119 aa).

It belongs to the bacterial ribosomal protein bL20 family.

It is found in the plastid. Its subcellular location is the chloroplast. Functionally, binds directly to 23S ribosomal RNA and is necessary for the in vitro assembly process of the 50S ribosomal subunit. It is not involved in the protein synthesizing functions of that subunit. This chain is Large ribosomal subunit protein bL20c (rpl20), found in Pinus thunbergii (Japanese black pine).